We begin with the raw amino-acid sequence, 1061 residues long: Ribonuclease E (1061 aa).

In terms of domain architecture, S1 motif spans A39 to F119. The interval F57–K112 is interaction with RNA. An interaction with RNA 5'-terminal monophosphate region spans residues R169–T170. Mg(2+)-binding residues include D303 and D346. Residues C404 and C407 each coordinate Zn(2+). Positions C404–C407 are required for zinc-mediated homotetramerization and catalytic activity. Disordered regions lie at residues F532–P565, E586–Y731, and E752–T822. The span at D536 to P546 shows a compositional bias: pro residues. Over residues A547 to P565 the composition is skewed to low complexity. 3 stretches are compositionally biased toward basic and acidic residues: residues A598–R608, N615–R640, and E652–A690. Basic residues predominate over residues R796–R814. Residues A833 to R850 are interaction with enolase. The interval E1021 to E1061 is interaction with PNPase. Residues P1031 to E1061 are disordered. The segment covering G1043–A1055 has biased composition (low complexity).

It belongs to the RNase E/G family. RNase E subfamily. In terms of assembly, component of the RNA degradosome, which is a multiprotein complex involved in RNA processing and mRNA degradation. Within the RNA degradosome, RNase E assembles into a homotetramer formed by a dimer of dimers. Tetramerization is essential for catalytic activity, but not for RNA-binding. Interacts with RhlB, PNPase (pnp) and enolase (eno). Interacts with DeaD at reduced temperature. Requires Zn(2+) as cofactor. The cofactor is Mg(2+).

It is found in the cytoplasm. It localises to the cell inner membrane. It carries out the reaction Endonucleolytic cleavage of single-stranded RNA in A- and U-rich regions.. Its activity is regulated as follows. The presence of a 5'-monophosphate on substrate RNA accelerates its cleavage by catalytically activating the enzyme. Binding to the membrane stabilizes protein structure and increases affinity for the substrate. Endoribonuclease that plays a central role in RNA processing and decay. Required for the maturation of 5S and 16S rRNAs and the majority of tRNAs. Also involved in the degradation of most mRNAs. Can also process other RNA species, such as RNAI, a molecule that controls the replication of ColE1 plasmid, and the cell division inhibitor DicF-RNA. It initiates the decay of RNAs by cutting them internally near their 5'-end. It is able to remove poly(A) tails by an endonucleolytic process. Required to initiate rRNA degradation during both starvation and quality control; acts after RNase PH (rph) exonucleolytically digests the 3'-end of the 16S rRNA. Degradation of 16S rRNA leads to 23S rRNA degradation. Processes the 3 tRNA(Pro) precursors immediately after the 3'-CCA to generate the mature ends. Functionally, prefers 5'-monophosphorylated substrates over 5'-triphosphorylated substrates. 5'-monophosphate-assisted cleavage requires at least 2 and preferably 3 or more unpaired 5'-terminal nucleotides. The optimal spacing between the 5' end and the scissile phosphate appears to be 8 nucleotides. Any sequence of unpaired nucleotides at the 5'-end is tolerated. This Escherichia coli (strain K12) protein is Ribonuclease E.